Reading from the N-terminus, the 361-residue chain is Phosphoserine aminotransferase (361 aa).

Residue Arg-43 participates in L-glutamate binding. Pyridoxal 5'-phosphate is bound by residues Trp-103, Thr-153, Asp-173, and Gln-196. Residue Lys-197 is modified to N6-(pyridoxal phosphate)lysine. Residue 238-239 (NT) participates in pyridoxal 5'-phosphate binding.

Belongs to the class-V pyridoxal-phosphate-dependent aminotransferase family. SerC subfamily. In terms of assembly, homodimer. Requires pyridoxal 5'-phosphate as cofactor.

The protein localises to the cytoplasm. The catalysed reaction is O-phospho-L-serine + 2-oxoglutarate = 3-phosphooxypyruvate + L-glutamate. It carries out the reaction 4-(phosphooxy)-L-threonine + 2-oxoglutarate = (R)-3-hydroxy-2-oxo-4-phosphooxybutanoate + L-glutamate. Its pathway is amino-acid biosynthesis; L-serine biosynthesis; L-serine from 3-phospho-D-glycerate: step 2/3. It functions in the pathway cofactor biosynthesis; pyridoxine 5'-phosphate biosynthesis; pyridoxine 5'-phosphate from D-erythrose 4-phosphate: step 3/5. Functionally, catalyzes the reversible conversion of 3-phosphohydroxypyruvate to phosphoserine and of 3-hydroxy-2-oxo-4-phosphonooxybutanoate to phosphohydroxythreonine. The chain is Phosphoserine aminotransferase from Hahella chejuensis (strain KCTC 2396).